A 468-amino-acid chain; its full sequence is E3 ubiquitin-protein ligase TRIM11 (468 aa).

Residues 16-57 (CAICLDYFTDPVMTDCGHNFCRECIRRCWGQPEGPYACPECR) form an RING-type zinc finger. A Phosphoserine modification is found at serine 85. A B box-type zinc finger spans residues 87-128 (VPQGVCAAHREPLAAFCGDELRLLCAACERSGEHWAHRVRPL). The Zn(2+) site is built by cysteine 92, histidine 95, cysteine 114, and histidine 120. Residues 128–233 (LQDAAEDLKS…QLAELITELE (106 aa)) are a coiled coil. The B30.2/SPRY domain maps to 268 to 461 (EMRTVCRVPG…MTICRLKGGP (194 aa)). Lysine 458 participates in a covalent cross-link: Glycyl lysine isopeptide (Lys-Gly) (interchain with G-Cter in ubiquitin).

Belongs to the TRIM/RBCC family. As to quaternary structure, binds cytoplasmic tail of integrin alpha-1. Interacts with the HN peptide. Interacts with PHOX2B. Interacts (when autoubiquitinated) with SQSTM1/p62; promoting AIM2 recruitment to autophagosomes. Interacts with AIM2; promoting its autophagy-dependent degradation. In terms of processing, autoubiquitinated upon DNA stimulation; autoubiquitination promotes interaction with SQSTM1/p62 and recruitment of AIM2 to autophagosomes.

The protein resides in the cytoplasm. The protein localises to the nucleus. The enzyme catalyses S-ubiquitinyl-[E2 ubiquitin-conjugating enzyme]-L-cysteine + [acceptor protein]-L-lysine = [E2 ubiquitin-conjugating enzyme]-L-cysteine + N(6)-ubiquitinyl-[acceptor protein]-L-lysine.. It functions in the pathway protein modification; protein ubiquitination. Functionally, E3 ubiquitin-protein ligase that promotes the degradation of insoluble ubiquitinated proteins, including insoluble PAX6, poly-Gln repeat expanded HTT and poly-Ala repeat expanded ARX. Mediates PAX6 ubiquitination leading to proteasomal degradation, thereby modulating cortical neurogenesis. May also inhibit PAX6 transcriptional activity, possibly in part by preventing the binding of PAX6 to its consensus sequences. May contribute to the regulation of the intracellular level of HN (humanin) or HN-containing proteins through the proteasomal degradation pathway. Mediates MED15 ubiquitination leading to proteasomal degradation. May contribute to the innate restriction of retroviruses. Upon overexpression, reduces HIV-1 and murine leukemia virus infectivity, by suppressing viral gene expression. Antiviral activity depends on a functional E3 ubiquitin-protein ligase domain. May regulate TRIM5 turnover via the proteasome pathway, thus counteracting the TRIM5-mediated cross-species restriction of retroviral infection at early stages of the retroviral life cycle. Acts as an inhibitor of the AIM2 inflammasome by promoting autophagy-dependent degradation of AIM2. Mechanistically, undergoes autoubiquitination upon DNA stimulation, promoting interaction with AIM2 and SQSTM1/p62, leading to AIM2 recruitment to autophagosomes. This Bos taurus (Bovine) protein is E3 ubiquitin-protein ligase TRIM11 (TRIM11).